Consider the following 92-residue polypeptide: Small ribosomal subunit protein uS19 (92 aa).

The protein belongs to the universal ribosomal protein uS19 family.

Its function is as follows. Protein S19 forms a complex with S13 that binds strongly to the 16S ribosomal RNA. The protein is Small ribosomal subunit protein uS19 of Acaryochloris marina (strain MBIC 11017).